Here is a 214-residue protein sequence, read N- to C-terminus: uncharacterized protein (214 aa).

The next 2 helical transmembrane spans lie at 19 to 39 (IAIFALAFISFILILIISYIL) and 50 to 70 (LALFLMDNLYSILLKIFLLIG).

Its subcellular location is the cell membrane. This is an uncharacterized protein from Methanocaldococcus jannaschii (strain ATCC 43067 / DSM 2661 / JAL-1 / JCM 10045 / NBRC 100440) (Methanococcus jannaschii).